The primary structure comprises 296 residues: CDP-diacylglycerol--glycerol-3-phosphate 3-phosphatidyltransferase 1, chloroplastic/mitochondrial (296 aa).

A chloroplast and mitochondrion-targeting transit peptide spans 1–39; it reads MLRSGLASLIVDVNLRRTLRPSPTFSFPAHLSRCIITSR. Residues 62–82 are compositionally biased toward low complexity; it reads FSSSSSSEQSRPTSSSRNSFS. Residues 62–103 are disordered; that stretch reads FSSSSSSEQSRPTSSSRNSFSGHGQLDSDDNSSPPPSQSSSK. The next 5 membrane-spanning stretches (helical) occupy residues 104–124, 126–146, 164–184, 189–209, and 261–281; these read VLTLPTVLTLGRVAAVPLLVA, FYVDSWWGTTATTSIFIAAAI, FGAFLDPVADKLMVAATLILL, IQVAELGPLPWLLTVPSIAII, and VGWLVASGAGLLYVSAGLSVW.

It belongs to the CDP-alcohol phosphatidyltransferase class-I family. The cofactor is Mn(2+).

It localises to the plastid. Its subcellular location is the chloroplast membrane. The protein resides in the mitochondrion membrane. The catalysed reaction is a CDP-1,2-diacyl-sn-glycerol + sn-glycerol 3-phosphate = a 1,2-diacyl-sn-glycero-3-phospho-(1'-sn-glycero-3'-phosphate) + CMP + H(+). It functions in the pathway phospholipid metabolism; phosphatidylglycerol biosynthesis; phosphatidylglycerol from CDP-diacylglycerol: step 1/2. Its function is as follows. Catalyzes the committed step to the synthesis of the acidic phospholipids, including phosphatidylglycerol (PG). Transfers specifically a phosphatidyl group from CDP-diacylglycerol to glycerol-3-phosphate to form phosphatidylglycerophosphate. Cannot catalyze the phosphatidyl group transfer to inositol, serine, choline or phosphatidylglycerol. Possesses high activity with CDP-dipalmitoylglycerol and low activity with CDP-dioleoylglycerol. Essential for chloroplast differentiation and PG accumulation in thylakoids, an essential process for the assembly of antenna-reaction center complexes to optimize energy transfer from antenna pigments, and for subsequent photochemical efficiency of photosystem II (PSII). During cold acclimation (at 5 degrees Celsius), necessary for the photosystem I (PSI) photochemistry, including both reaction center and light-harvesting integrity. But dispensable in mitochondrion, being redundant with PGPS2 for the production of PG and its derivative cardiolipin (CL) in mitochondrial membranes. Together with PGPS2, required for the proper embryo development by providing PG accurate levels. The chain is CDP-diacylglycerol--glycerol-3-phosphate 3-phosphatidyltransferase 1, chloroplastic/mitochondrial from Arabidopsis thaliana (Mouse-ear cress).